We begin with the raw amino-acid sequence, 550 residues long: Glutamine--tRNA ligase (550 aa).

Residues 34 to 44 carry the 'HIGH' region motif; that stretch reads PEPNGYLHLGH. Residues 35-37 and 41-47 each bind ATP; these read EPN and HLGHAKS. L-glutamine is bound by residues D67 and Y212. Residues T231, 261-262, and 269-271 contribute to the ATP site; these read RL and LSK. The short motif at 268-272 is the 'KMSKS' region element; sequence VLSKR.

The protein belongs to the class-I aminoacyl-tRNA synthetase family. As to quaternary structure, monomer.

The protein localises to the cytoplasm. It catalyses the reaction tRNA(Gln) + L-glutamine + ATP = L-glutaminyl-tRNA(Gln) + AMP + diphosphate. This is Glutamine--tRNA ligase from Buchnera aphidicola subsp. Baizongia pistaciae (strain Bp).